The primary structure comprises 187 residues: Cell division protein SepF (187 aa).

The interval glutamate 21–serine 97 is disordered. Composition is skewed to polar residues over residues glutamate 38–threonine 63 and arginine 70–serine 97.

Belongs to the SepF family. Homodimer. Interacts with FtsZ.

Its subcellular location is the cytoplasm. In terms of biological role, cell division protein that is part of the divisome complex and is recruited early to the Z-ring. Probably stimulates Z-ring formation, perhaps through the cross-linking of FtsZ protofilaments. Its function overlaps with FtsA. This is Cell division protein SepF from Staphylococcus aureus (strain Mu3 / ATCC 700698).